We begin with the raw amino-acid sequence, 191 residues long: Protein GrpE (191 aa).

Residues 1–49 form a disordered region; the sequence is MSEEKQTAEQVEAAEQEEVTEQAEQAASQEQHEETAGQEEALQHQIDEL. The span at 12–21 shows a compositional bias: acidic residues; the sequence is EAAEQEEVTE. A compositionally biased stretch (basic and acidic residues) spans 30 to 49; the sequence is EQHEETAGQEEALQHQIDEL.

The protein belongs to the GrpE family. As to quaternary structure, homodimer.

Its subcellular location is the cytoplasm. Participates actively in the response to hyperosmotic and heat shock by preventing the aggregation of stress-denatured proteins, in association with DnaK and GrpE. It is the nucleotide exchange factor for DnaK and may function as a thermosensor. Unfolded proteins bind initially to DnaJ; upon interaction with the DnaJ-bound protein, DnaK hydrolyzes its bound ATP, resulting in the formation of a stable complex. GrpE releases ADP from DnaK; ATP binding to DnaK triggers the release of the substrate protein, thus completing the reaction cycle. Several rounds of ATP-dependent interactions between DnaJ, DnaK and GrpE are required for fully efficient folding. The polypeptide is Protein GrpE (Bacillus velezensis (strain DSM 23117 / BGSC 10A6 / LMG 26770 / FZB42) (Bacillus amyloliquefaciens subsp. plantarum)).